Here is a 393-residue protein sequence, read N- to C-terminus: Autophagy-related protein 18c (393 aa).

WD repeat units lie at residues 27-65 (KEEA…ETFR), 70-114 (DGGF…CISE), 199-239 (AHDS…RLQE), and 244-283 (VDRA…VGED).

It belongs to the WD repeat PROPPIN family. In terms of assembly, component of the PI(3,5)P2 regulatory complex at least composed of ATG18, SAC/FIG4, FAB1 and VAC14. Expressed in roots, stems, flowers and leaves.

It localises to the preautophagosomal structure membrane. The protein localises to the vacuole membrane. The PI(3,5)P2 regulatory complex regulates both the synthesis and turnover of phosphatidylinositol 3,5-bisphosphate (PtdIns(3,5)P2). Required for autophagy. This chain is Autophagy-related protein 18c (ATG18C), found in Arabidopsis thaliana (Mouse-ear cress).